The chain runs to 315 residues: MSKPLRIIFAGTPDFAARHLSALIDSHHEVIGVYTQPDRPAGRGKKLTASPVKELALEHNIPVFQPENFKSDEAKQELVDQNADLMVVVAYGLLLPQAVLDTPKLGCINVHGSILPRWRGAAPIQRSIWAGDAETGVTIMQMDIGLDTGDMLKIATLPIEATDTSASMYDKLAELGPVALVDCLSDIADGSAIAQKQDDELANYAKKLSKEEAKIDWTMDAIAIERCVRAFNPWPMSHFSVEDKAIKVWQSRVESYTGDATPGTIIQADKTGIYVATGSDAIVFEQLQVPGKKAMGVQDILNSRKEWFEVGNTLN.

113–116 provides a ligand contact to (6S)-5,6,7,8-tetrahydrofolate; that stretch reads SILP.

Belongs to the Fmt family.

It carries out the reaction L-methionyl-tRNA(fMet) + (6R)-10-formyltetrahydrofolate = N-formyl-L-methionyl-tRNA(fMet) + (6S)-5,6,7,8-tetrahydrofolate + H(+). Functionally, attaches a formyl group to the free amino group of methionyl-tRNA(fMet). The formyl group appears to play a dual role in the initiator identity of N-formylmethionyl-tRNA by promoting its recognition by IF2 and preventing the misappropriation of this tRNA by the elongation apparatus. The chain is Methionyl-tRNA formyltransferase from Aliivibrio fischeri (strain ATCC 700601 / ES114) (Vibrio fischeri).